The primary structure comprises 122 residues: uncharacterized protein (122 aa).

The protein belongs to the phage O protein family.

This is an uncharacterized protein from Escherichia coli O6:H1 (strain CFT073 / ATCC 700928 / UPEC).